The chain runs to 116 residues: Phosphoribosyl-AMP cyclohydrolase (116 aa).

Asp-82 provides a ligand contact to Mg(2+). Position 83 (Cys-83) interacts with Zn(2+). Residues Asp-84 and Asp-86 each contribute to the Mg(2+) site. Zn(2+)-binding residues include Cys-99 and Cys-106.

Belongs to the PRA-CH family. Homodimer. Requires Mg(2+) as cofactor. Zn(2+) serves as cofactor.

The protein localises to the cytoplasm. The enzyme catalyses 1-(5-phospho-beta-D-ribosyl)-5'-AMP + H2O = 1-(5-phospho-beta-D-ribosyl)-5-[(5-phospho-beta-D-ribosylamino)methylideneamino]imidazole-4-carboxamide. It participates in amino-acid biosynthesis; L-histidine biosynthesis; L-histidine from 5-phospho-alpha-D-ribose 1-diphosphate: step 3/9. Catalyzes the hydrolysis of the adenine ring of phosphoribosyl-AMP. In Saccharopolyspora erythraea (strain ATCC 11635 / DSM 40517 / JCM 4748 / NBRC 13426 / NCIMB 8594 / NRRL 2338), this protein is Phosphoribosyl-AMP cyclohydrolase.